Here is a 510-residue protein sequence, read N- to C-terminus: Membrane-bound transcription factor site-2 protease (510 aa).

Topologically, residues M1–P3 are cytoplasmic. A helical transmembrane segment spans residues V4 to L24. Residues K25–Q74 are Lumenal-facing. 2 consecutive transmembrane segments (helical) span residues W75–G95 and K96–A107. Residues D108–Q135 are Lumenal-facing. A helical transmembrane segment spans residues V136–V160. Residue H162 coordinates Zn(2+). Residue E163 is part of the active site. 3 helical membrane passes run G165–F177, N178–L200, and F220–Y242. H166 provides a ligand contact to Zn(2+). At T243–K437 the chain is on the lumenal side. An N-linked (GlcNAc...) asparagine glycan is attached at N328. 2 helical membrane-spanning segments follow: residues Y438–F455 and A456–L467. Residues D468–L483 are Lumenal-facing. Residues I484 to L504 form a helical membrane-spanning segment. Over W505–R510 the chain is Cytoplasmic.

The protein belongs to the peptidase M50A family. The cofactor is Zn(2+).

It is found in the membrane. The protein localises to the cytoplasm. Its subcellular location is the golgi apparatus membrane. It carries out the reaction Cleaves several transcription factors that are type-2 transmembrane proteins within membrane-spanning domains. Known substrates include sterol regulatory element-binding protein (SREBP) -1, SREBP-2 and forms of the transcriptional activator ATF6. SREBP-2 is cleaved at the site 477-DRSRILL-|-CVLTFLCLSFNPLTSLLQWGGA-505. The residues Asn-Pro, 11 residues distal to the site of cleavage in the membrane-spanning domain, are important for cleavage by S2P endopeptidase. Replacement of either of these residues does not prevent cleavage, but there is no cleavage if both of these residues are replaced.. Functionally, zinc metalloprotease that mediates intramembrane proteolysis of proteins such as ATF6, ATF6B, SREBF1/SREBP1 and SREBF2/SREBP2. Catalyzes the second step in the proteolytic activation of the sterol regulatory element-binding proteins (SREBPs) SREBF1/SREBP1 and SREBF2/SREBP2: cleaves SREBPs within the first transmembrane segment, thereby releasing the N-terminal segment with a portion of the transmembrane segment attached. Mature N-terminal SREBP fragments shuttle to the nucleus and activate gene transcription. Also mediates the second step in the proteolytic activation of the cyclic AMP-dependent transcription factor ATF-6 (ATF6 and ATF6B). Involved in intramembrane proteolysis during bone formation. In astrocytes and osteoblasts, upon DNA damage and ER stress, mediates the second step of the regulated intramembrane proteolytic activation of the transcription factor CREB3L1, leading to the inhibition of cell-cycle progression. In Cricetulus griseus (Chinese hamster), this protein is Membrane-bound transcription factor site-2 protease (MBTPS2).